The following is a 147-amino-acid chain: MEIAVLGLGCFWGPEIKFSKLEGVIKTEVGYCGGDSKTVTYKEVCTCNTNHAEVVKLDFDPKIISYEKILNFFFEIHDPTTLNSQGPDFGTQYRSEIFYLSDRQKEIAESVIKKVNLKLSGNVVTKSSLLKNYCPAEEYHQRYLEKR.

Residue Cys-10 is part of the active site.

It belongs to the MsrA Met sulfoxide reductase family.

The enzyme catalyses L-methionyl-[protein] + [thioredoxin]-disulfide + H2O = L-methionyl-(S)-S-oxide-[protein] + [thioredoxin]-dithiol. It catalyses the reaction [thioredoxin]-disulfide + L-methionine + H2O = L-methionine (S)-S-oxide + [thioredoxin]-dithiol. Functionally, has an important function as a repair enzyme for proteins that have been inactivated by oxidation. Catalyzes the reversible oxidation-reduction of methionine sulfoxide in proteins to methionine. This Pelagibacter ubique (strain HTCC1062) protein is Peptide methionine sulfoxide reductase MsrA.